Consider the following 287-residue polypeptide: Phosphatidylglycerol--prolipoprotein diacylglyceryl transferase (287 aa).

A run of 4 helical transmembrane segments spans residues 15-35 (IGPLSIYWYGIIIAFGAILAI), 55-75 (FVMFAVPIAIIFARIYYVFFE), 90-110 (IWEGGIAIHGAVIGGVITAIV), and 117-137 (VSFWQIADIVAPSLILGQAIG). Arg-138 provides a ligand contact to a 1,2-diacyl-sn-glycero-3-phospho-(1'-sn-glycerol). The next 2 membrane-spanning stretches (helical) occupy residues 180 to 200 (HPTFLYESVWNILIFVGLLLL) and 238 to 258 (IIRTAQFISILIIIVSIIFII).

Belongs to the Lgt family.

The protein localises to the cell membrane. It carries out the reaction L-cysteinyl-[prolipoprotein] + a 1,2-diacyl-sn-glycero-3-phospho-(1'-sn-glycerol) = an S-1,2-diacyl-sn-glyceryl-L-cysteinyl-[prolipoprotein] + sn-glycerol 1-phosphate + H(+). It functions in the pathway protein modification; lipoprotein biosynthesis (diacylglyceryl transfer). Its function is as follows. Catalyzes the transfer of the diacylglyceryl group from phosphatidylglycerol to the sulfhydryl group of the N-terminal cysteine of a prolipoprotein, the first step in the formation of mature lipoproteins. This Oceanobacillus iheyensis (strain DSM 14371 / CIP 107618 / JCM 11309 / KCTC 3954 / HTE831) protein is Phosphatidylglycerol--prolipoprotein diacylglyceryl transferase.